Reading from the N-terminus, the 520-residue chain is Protein nucleotidyltransferase YdiU (520 aa).

The ATP site is built by glycine 108, glycine 110, arginine 111, lysine 130, aspartate 142, glycine 143, arginine 193, and arginine 200. Aspartate 269 acts as the Proton acceptor in catalysis. Mg(2+) contacts are provided by asparagine 270 and aspartate 279. Aspartate 279 provides a ligand contact to ATP.

The protein belongs to the SELO family. Mg(2+) serves as cofactor. Mn(2+) is required as a cofactor.

It catalyses the reaction L-seryl-[protein] + ATP = 3-O-(5'-adenylyl)-L-seryl-[protein] + diphosphate. The enzyme catalyses L-threonyl-[protein] + ATP = 3-O-(5'-adenylyl)-L-threonyl-[protein] + diphosphate. The catalysed reaction is L-tyrosyl-[protein] + ATP = O-(5'-adenylyl)-L-tyrosyl-[protein] + diphosphate. It carries out the reaction L-histidyl-[protein] + UTP = N(tele)-(5'-uridylyl)-L-histidyl-[protein] + diphosphate. It catalyses the reaction L-seryl-[protein] + UTP = O-(5'-uridylyl)-L-seryl-[protein] + diphosphate. The enzyme catalyses L-tyrosyl-[protein] + UTP = O-(5'-uridylyl)-L-tyrosyl-[protein] + diphosphate. Its function is as follows. Nucleotidyltransferase involved in the post-translational modification of proteins. It can catalyze the addition of adenosine monophosphate (AMP) or uridine monophosphate (UMP) to a protein, resulting in modifications known as AMPylation and UMPylation. The protein is Protein nucleotidyltransferase YdiU of Cupriavidus pinatubonensis (strain JMP 134 / LMG 1197) (Cupriavidus necator (strain JMP 134)).